The primary structure comprises 314 residues: Olfactory receptor 9Q2 (314 aa).

Over 1-25 (MAERNYTVVTEFFLTAFTEHLQWRV) the chain is Extracellular. N-linked (GlcNAc...) asparagine glycosylation is present at N5. The helical transmembrane segment at 26–46 (PLFLIFLSFYLATMLGNTGMI) threads the bilayer. Residues 47–54 (LLIRGDRR) are Cytoplasmic-facing. A helical transmembrane segment spans residues 55 to 75 (LHTPMYFFLSHLSLVDICYSS). Topologically, residues 76 to 99 (AIIPQMLAVLWEHGTTISQARCAA) are extracellular. C97 and C189 are disulfide-bonded. The chain crosses the membrane as a helical span at residues 100–120 (QFFLFTFFASIDCYLLAIMAY). Residues 121–139 (DRYTAVCQPLLYVTIITEK) lie on the Cytoplasmic side of the membrane. A helical membrane pass occupies residues 140-160 (ARWGLVTGAYVAGFFSAFVRT). Residues 161–197 (VTAFTLSFCGNNEINFIFCDLPPLLKLSCGDSYTQEV) lie on the Extracellular side of the membrane. Residues 198-217 (VIIVFALFVMPACILVILVS) traverse the membrane as a helical segment. Over 218–237 (YLFIIVAILQIHSAGGRAKT) the chain is Cytoplasmic. Residues 238–258 (FSTCASHLTAVALFFGTLIFM) traverse the membrane as a helical segment. The Extracellular portion of the chain corresponds to 259–271 (YLRDNTGQSSEGD). The helical transmembrane segment at 272-292 (RVVSVLYTVVTPMLNPLIYSL) threads the bilayer. Over 293–314 (RNKEVKEATRKALSKSKPARRP) the chain is Cytoplasmic.

It belongs to the G-protein coupled receptor 1 family.

Its subcellular location is the cell membrane. In terms of biological role, odorant receptor. This chain is Olfactory receptor 9Q2 (OR9Q2), found in Homo sapiens (Human).